The following is a 128-amino-acid chain: Small ribosomal subunit protein uS11m (128 aa).

The protein belongs to the universal ribosomal protein uS11 family.

The protein localises to the mitochondrion. This is Small ribosomal subunit protein uS11m (RPS11) from Prototheca wickerhamii.